The primary structure comprises 247 residues: Ribosomal RNA small subunit methyltransferase G (247 aa).

S-adenosyl-L-methionine-binding positions include Gly84, Phe89, 136 to 137 (AE), and Arg155.

The protein belongs to the methyltransferase superfamily. RNA methyltransferase RsmG family.

Its subcellular location is the cytoplasm. Specifically methylates the N7 position of a guanine in 16S rRNA. The sequence is that of Ribosomal RNA small subunit methyltransferase G from Prochlorococcus marinus (strain MIT 9313).